Here is a 206-residue protein sequence, read N- to C-terminus: Imidazole glycerol phosphate synthase subunit HisH (206 aa).

A Glutamine amidotransferase type-1 domain is found at 5 to 206; sequence SVVVLDYGSG…AVLRNWIERL (202 aa). The active-site Nucleophile is the C83. Residues H187 and E189 contribute to the active site.

In terms of assembly, heterodimer of HisH and HisF.

It localises to the cytoplasm. It carries out the reaction 5-[(5-phospho-1-deoxy-D-ribulos-1-ylimino)methylamino]-1-(5-phospho-beta-D-ribosyl)imidazole-4-carboxamide + L-glutamine = D-erythro-1-(imidazol-4-yl)glycerol 3-phosphate + 5-amino-1-(5-phospho-beta-D-ribosyl)imidazole-4-carboxamide + L-glutamate + H(+). It catalyses the reaction L-glutamine + H2O = L-glutamate + NH4(+). It participates in amino-acid biosynthesis; L-histidine biosynthesis; L-histidine from 5-phospho-alpha-D-ribose 1-diphosphate: step 5/9. IGPS catalyzes the conversion of PRFAR and glutamine to IGP, AICAR and glutamate. The HisH subunit catalyzes the hydrolysis of glutamine to glutamate and ammonia as part of the synthesis of IGP and AICAR. The resulting ammonia molecule is channeled to the active site of HisF. This Mycolicibacterium paratuberculosis (strain ATCC BAA-968 / K-10) (Mycobacterium paratuberculosis) protein is Imidazole glycerol phosphate synthase subunit HisH.